Consider the following 373-residue polypeptide: Methionine import ATP-binding protein MetN 1 (373 aa).

In terms of domain architecture, ABC transporter spans 29–270 (ILIDRVRKVY…PRHEVTRRFV (242 aa)). 67–74 (GRSGAGKS) is an ATP binding site.

Belongs to the ABC transporter superfamily. Methionine importer (TC 3.A.1.24) family. The complex is composed of two ATP-binding proteins (MetN), two transmembrane proteins (MetI) and a solute-binding protein (MetQ).

The protein resides in the cell inner membrane. It carries out the reaction L-methionine(out) + ATP + H2O = L-methionine(in) + ADP + phosphate + H(+). The catalysed reaction is D-methionine(out) + ATP + H2O = D-methionine(in) + ADP + phosphate + H(+). Functionally, part of the ABC transporter complex MetNIQ involved in methionine import. Responsible for energy coupling to the transport system. This is Methionine import ATP-binding protein MetN 1 from Rhodopseudomonas palustris (strain ATCC BAA-98 / CGA009).